Reading from the N-terminus, the 236-residue chain is uncharacterized protein (236 aa).

The disordered stretch occupies residues 186–236 (HGRGDTRNLNDITGLGHERERDRENTHYEKKPKLDSDSEVDIRSFRQDMDL). Residues 201 to 236 (GHERERDRENTHYEKKPKLDSDSEVDIRSFRQDMDL) show a composition bias toward basic and acidic residues. Position 221 is a phosphoserine (Ser221).

This is an uncharacterized protein from Saccharomyces cerevisiae (strain ATCC 204508 / S288c) (Baker's yeast).